Consider the following 156-residue polypeptide: Small ribosomal subunit protein uS7 (156 aa).

This sequence belongs to the universal ribosomal protein uS7 family. Part of the 30S ribosomal subunit. Contacts proteins S9 and S11.

Functionally, one of the primary rRNA binding proteins, it binds directly to 16S rRNA where it nucleates assembly of the head domain of the 30S subunit. Is located at the subunit interface close to the decoding center, probably blocks exit of the E-site tRNA. This chain is Small ribosomal subunit protein uS7, found in Acaryochloris marina (strain MBIC 11017).